The chain runs to 81 residues: ATP synthase subunit c (81 aa).

Transmembrane regions (helical) follow at residues 6–26 (AAAS…GPGI) and 57–77 (LAFM…LLFA).

This sequence belongs to the ATPase C chain family. As to quaternary structure, F-type ATPases have 2 components, F(1) - the catalytic core - and F(0) - the membrane proton channel. F(1) has five subunits: alpha(3), beta(3), gamma(1), delta(1), epsilon(1). F(0) has four main subunits: a(1), b(1), b'(1) and c(10-14). The alpha and beta chains form an alternating ring which encloses part of the gamma chain. F(1) is attached to F(0) by a central stalk formed by the gamma and epsilon chains, while a peripheral stalk is formed by the delta, b and b' chains.

It is found in the cellular thylakoid membrane. Its function is as follows. F(1)F(0) ATP synthase produces ATP from ADP in the presence of a proton or sodium gradient. F-type ATPases consist of two structural domains, F(1) containing the extramembraneous catalytic core and F(0) containing the membrane proton channel, linked together by a central stalk and a peripheral stalk. During catalysis, ATP synthesis in the catalytic domain of F(1) is coupled via a rotary mechanism of the central stalk subunits to proton translocation. Key component of the F(0) channel; it plays a direct role in translocation across the membrane. A homomeric c-ring of between 10-14 subunits forms the central stalk rotor element with the F(1) delta and epsilon subunits. This Picosynechococcus sp. (strain ATCC 27264 / PCC 7002 / PR-6) (Agmenellum quadruplicatum) protein is ATP synthase subunit c.